A 57-amino-acid chain; its full sequence is Cytochrome b-c1 complex subunit 10, mitochondrial (57 aa).

The Mitochondrial matrix segment spans residues Met-1–Ala-23. Residues Ala-24 to Ile-44 traverse the membrane as a helical segment. The Mitochondrial intermembrane portion of the chain corresponds to Lys-45–Lys-57.

The protein belongs to the UQCR11/QCR10 family. As to quaternary structure, component of the ubiquinol-cytochrome c oxidoreductase (cytochrome b-c1 complex, complex III, CIII), a multisubunit enzyme composed of 10 subunits. The complex is composed of 3 respiratory subunits cytochrome b (MT-CYB), cytochrome c1 (CYC1-1 or CYC1-2) and Rieske protein (UCR1-1 or UCR1-2), 2 core protein subunits MPPalpha1 (or MPPalpha2) and MPPB, and 5 low-molecular weight protein subunits QCR7-1 (or QCR7-2), UCRQ-1 (or UCRQ-2), QCR9, UCRY and probably QCR6-1 (or QCR6-2). The complex exists as an obligatory dimer and forms supercomplexes (SCs) in the inner mitochondrial membrane with NADH-ubiquinone oxidoreductase (complex I, CI), resulting in different assemblies (supercomplexes SCI(1)III(2) and SCI(2)III(4)).

Its subcellular location is the mitochondrion inner membrane. Component of the ubiquinol-cytochrome c oxidoreductase, a multisubunit transmembrane complex that is part of the mitochondrial electron transport chain which drives oxidative phosphorylation. The respiratory chain contains 3 multisubunit complexes succinate dehydrogenase (complex II, CII), ubiquinol-cytochrome c oxidoreductase (cytochrome b-c1 complex, complex III, CIII) and cytochrome c oxidase (complex IV, CIV), that cooperate to transfer electrons derived from NADH and succinate to molecular oxygen, creating an electrochemical gradient over the inner membrane that drives transmembrane transport and the ATP synthase. The cytochrome b-c1 complex catalyzes electron transfer from ubiquinol to cytochrome c, linking this redox reaction to translocation of protons across the mitochondrial inner membrane, with protons being carried across the membrane as hydrogens on the quinol. In the process called Q cycle, 2 protons are consumed from the matrix, 4 protons are released into the intermembrane space and 2 electrons are passed to cytochrome c. The chain is Cytochrome b-c1 complex subunit 10, mitochondrial (UCRY) from Arabidopsis thaliana (Mouse-ear cress).